Consider the following 181-residue polypeptide: Methanesulfonate monooxygenase hydroxylase subunit beta (181 aa).

Belongs to the bacterial ring-hydroxylating dioxygenase beta subunit family. The MSA monooxygenase system consists of 4 proteins: the 2 subunits of the hydroxylase component (MsmA and MsmB), a ferredoxin (MsmC) and a ferredoxin reductase (MsmD). The hydroxylase component consists of a 3 alpha (MsmA) and 3 beta (MsmB) subunits.

The protein localises to the cytoplasm. The catalysed reaction is methanesulfonate + NADH + O2 = sulfite + formaldehyde + NAD(+) + H2O. Its activity is regulated as follows. MSAMO is inhibited by metal chelators (such as bathophenanthroline, bathocuprione, neocuprione, alpha-alpha-dipyridil and sodium EDTA) and by sodium azide, sodium arsenate and potassium cyanide. Its function is as follows. Methanesulfonate monooxygenase (MSAMO) mediates the primary degradation of methanesulfonic acid (MSA) to produce formaldehyd and inorganic sulfite by initial hydroxylation of the carbon atom prior to spontaneous cleavage of the unstable hydroxymethanesulfonic acid. MSAMO has a restricted substrate range that includes only the short-chain aliphatic sulfonates (methane- to butanesulfonate) and excludes all larger molecules, such as arylsulfonates and aromatic sulfonates. All MSAMO components are required for enzyme activity. In Methylosulfonomonas methylovora, this protein is Methanesulfonate monooxygenase hydroxylase subunit beta.